We begin with the raw amino-acid sequence, 582 residues long: Cryptochrome-2 (582 aa).

The Photolyase/cryptochrome alpha/beta domain maps to 12–141 (CRSVHWFRRG…EVVIENSHTL (130 aa)). Residues serine 261, glutamine 298, histidine 364, and 396 to 398 (DAD) each bind FAD. The segment at 521 to 559 (GPVTDSAPGQGSSTSTAVRLPQSDQASPKRKHEGAEELC) is disordered. Residues 527 to 546 (APGQGSSTSTAVRLPQSDQA) show a composition bias toward polar residues.

It belongs to the DNA photolyase class-1 family. Component of the circadian core oscillator, which includes the CRY proteins, CLOCK or NPAS2, BMAL1 or BMAL2, CSNK1E, and the PER proteins. Requires FAD as cofactor. (6R)-5,10-methylene-5,6,7,8-tetrahydrofolate is required as a cofactor. Expressed in the pineal gland.

The protein resides in the cytoplasm. It is found in the nucleus. Functionally, transcriptional repressor which forms a core component of the circadian clock. The circadian clock, an internal time-keeping system, regulates various physiological processes through the generation of approximately 24 hour circadian rhythms in gene expression, which are translated into rhythms in metabolism and behavior. It is derived from the Latin roots 'circa' (about) and 'diem' (day) and acts as an important regulator of a wide array of physiological functions including metabolism, sleep, body temperature, blood pressure, endocrine, immune, cardiovascular, and renal function. Consists of two major components: the central clock, residing in the suprachiasmatic nucleus (SCN) of the brain, and the peripheral clocks that are present in nearly every tissue and organ system. Both the central and peripheral clocks can be reset by environmental cues, also known as Zeitgebers (German for 'timegivers'). The predominant Zeitgeber for the central clock is light, which is sensed by retina and signals directly to the SCN. The central clock entrains the peripheral clocks through neuronal and hormonal signals, body temperature and feeding-related cues, aligning all clocks with the external light/dark cycle. Circadian rhythms allow an organism to achieve temporal homeostasis with its environment at the molecular level by regulating gene expression to create a peak of protein expression once every 24 hours to control when a particular physiological process is most active with respect to the solar day. Transcription and translation of core clock components (CLOCK, NPAS2, BMAL1, BMAL2, PER1, PER2, PER3, CRY1 and CRY2) plays a critical role in rhythm generation, whereas delays imposed by post-translational modifications (PTMs) are important for determining the period (tau) of the rhythms (tau refers to the period of a rhythm and is the length, in time, of one complete cycle). A diurnal rhythm is synchronized with the day/night cycle, while the ultradian and infradian rhythms have a period shorter and longer than 24 hours, respectively. Disruptions in the circadian rhythms contribute to the pathology of cardiovascular diseases, cancer, metabolic syndromes and aging. A transcription/translation feedback loop (TTFL) forms the core of the molecular circadian clock mechanism. Transcription factors, CLOCK or NPAS2 and BMAL1 or BMAL2, form the positive limb of the feedback loop, act in the form of a heterodimer and activate the transcription of core clock genes and clock-controlled genes (involved in key metabolic processes), harboring E-box elements (5'-CACGTG-3') within their promoters. The core clock genes: PER1/2/3 and CRY1/2 which are transcriptional repressors form the negative limb of the feedback loop and interact with the CLOCK|NPAS2-BMAL1|BMAL2 heterodimer inhibiting its activity and thereby negatively regulating their own expression. This heterodimer also activates nuclear receptors NR1D1/2, RORA/B/G, which form a second feedback loop and which activate and repress BMAL1 transcription, respectively. CRY1 and CRY2 have redundant functions but also differential and selective contributions at least in defining the pace of the SCN circadian clock and its circadian transcriptional outputs. Less potent transcriptional repressor in cerebellum and liver than CRY1, though less effective in lengthening the period of the SCN oscillator. Seems to play a critical role in tuning SCN circadian period by opposing the action of CRY1. With CRY1, dispensable for circadian rhythm generation but necessary for the development of intercellular networks for rhythm synchrony. Represses CLOCK-BMAL1-mediated transcriptional activation. This Gallus gallus (Chicken) protein is Cryptochrome-2 (CRY2).